Here is a 237-residue protein sequence, read N- to C-terminus: MTRKVSRRLQELQKKVEDRAYEPLAALNLLKETATAKFPESAEAHIRLGIDPKYTDQQLRTTVALPKGTGQTIRVAVIARGEKVAEAKAAGADIAGSEELIEEISKGFLDFDLLIATPDVMPQVAKLGRQLGPRGLMPSPKGGTVTFDLEQAVNEFKAGKLEFRADRTGIVHVLFGKASFSADDLLANLKALQETIDRNRPSGAKGRYWRSVYISATMGPAIEVDINALRDPKLAEA.

Belongs to the universal ribosomal protein uL1 family. Part of the 50S ribosomal subunit.

Its function is as follows. Binds directly to 23S rRNA. The L1 stalk is quite mobile in the ribosome, and is involved in E site tRNA release. Functionally, protein L1 is also a translational repressor protein, it controls the translation of the L11 operon by binding to its mRNA. The chain is Large ribosomal subunit protein uL1 from Synechococcus sp. (strain ATCC 27144 / PCC 6301 / SAUG 1402/1) (Anacystis nidulans).